A 260-amino-acid polypeptide reads, in one-letter code: Thiazole synthase (260 aa).

Lysine 96 serves as the catalytic Schiff-base intermediate with DXP. 1-deoxy-D-xylulose 5-phosphate contacts are provided by residues glycine 157, 184–185 (AG), and 206–207 (NT).

This sequence belongs to the ThiG family. In terms of assembly, homotetramer. Forms heterodimers with either ThiH or ThiS.

The protein localises to the cytoplasm. It catalyses the reaction [ThiS sulfur-carrier protein]-C-terminal-Gly-aminoethanethioate + 2-iminoacetate + 1-deoxy-D-xylulose 5-phosphate = [ThiS sulfur-carrier protein]-C-terminal Gly-Gly + 2-[(2R,5Z)-2-carboxy-4-methylthiazol-5(2H)-ylidene]ethyl phosphate + 2 H2O + H(+). Its pathway is cofactor biosynthesis; thiamine diphosphate biosynthesis. Functionally, catalyzes the rearrangement of 1-deoxy-D-xylulose 5-phosphate (DXP) to produce the thiazole phosphate moiety of thiamine. Sulfur is provided by the thiocarboxylate moiety of the carrier protein ThiS. In vitro, sulfur can be provided by H(2)S. This Rhodopseudomonas palustris (strain TIE-1) protein is Thiazole synthase.